Here is an 88-residue protein sequence, read N- to C-terminus: Small ribosomal subunit protein bS20 (88 aa).

It belongs to the bacterial ribosomal protein bS20 family.

Functionally, binds directly to 16S ribosomal RNA. This chain is Small ribosomal subunit protein bS20, found in Maricaulis maris (strain MCS10) (Caulobacter maris).